A 395-amino-acid chain; its full sequence is ATP phosphoribosyltransferase regulatory subunit (395 aa).

Belongs to the class-II aminoacyl-tRNA synthetase family. HisZ subfamily. As to quaternary structure, heteromultimer composed of HisG and HisZ subunits.

Its subcellular location is the cytoplasm. The protein operates within amino-acid biosynthesis; L-histidine biosynthesis; L-histidine from 5-phospho-alpha-D-ribose 1-diphosphate: step 1/9. Functionally, required for the first step of histidine biosynthesis. May allow the feedback regulation of ATP phosphoribosyltransferase activity by histidine. This is ATP phosphoribosyltransferase regulatory subunit from Thioalkalivibrio sulfidiphilus (strain HL-EbGR7).